A 430-amino-acid chain; its full sequence is Histidinol dehydrogenase (430 aa).

NAD(+) is bound by residues Y130, Q191, and N214. Substrate-binding residues include S237, Q259, and H262. Zn(2+)-binding residues include Q259 and H262. Residues E327 and H328 each act as proton acceptor in the active site. H328, D361, E415, and H420 together coordinate substrate. Residue D361 participates in Zn(2+) binding. H420 contributes to the Zn(2+) binding site.

Belongs to the histidinol dehydrogenase family. Zn(2+) serves as cofactor.

It carries out the reaction L-histidinol + 2 NAD(+) + H2O = L-histidine + 2 NADH + 3 H(+). It participates in amino-acid biosynthesis; L-histidine biosynthesis; L-histidine from 5-phospho-alpha-D-ribose 1-diphosphate: step 9/9. Its function is as follows. Catalyzes the sequential NAD-dependent oxidations of L-histidinol to L-histidinaldehyde and then to L-histidine. The protein is Histidinol dehydrogenase of Brucella melitensis biotype 1 (strain ATCC 23456 / CCUG 17765 / NCTC 10094 / 16M).